The sequence spans 419 residues: Synaptosomal-associated protein 47 (419 aa).

T-SNARE coiled-coil homology domains are found at residues 109–171 and 356–418; these read AANP…LTEL and KDWP…MRKL.

This sequence belongs to the SVAP1 family. Associates with the BLOC-1 complex. Interacts with BLOC1S6. Forms a complex containing SNAP47, VAMP2 and STX1A.

The protein localises to the endomembrane system. The protein resides in the cytoplasm. Its subcellular location is the perinuclear region. May play a role in intracellular membrane fusion. The chain is Synaptosomal-associated protein 47 (Snap47) from Rattus norvegicus (Rat).